Reading from the N-terminus, the 402-residue chain is Flavohemoprotein (402 aa).

Residues Met-1–Ala-136 enclose the Globin domain. His-85 contacts heme b. Active-site charge relay system residues include Tyr-95 and Glu-135. The reductase stretch occupies residues Gly-147 to Gln-402. The 111-residue stretch at Lys-150–Asn-260 folds into the FAD-binding FR-type domain. Residues Tyr-188 and Arg-204–Ser-207 each bind FAD. Gly-273–Pro-278 provides a ligand contact to NADP(+). An FAD-binding site is contributed by Phe-394 to Pro-397.

This sequence belongs to the globin family. Two-domain flavohemoproteins subfamily. In the C-terminal section; belongs to the flavoprotein pyridine nucleotide cytochrome reductase family. Heme b serves as cofactor. Requires FAD as cofactor.

The catalysed reaction is 2 nitric oxide + NADPH + 2 O2 = 2 nitrate + NADP(+) + H(+). The enzyme catalyses 2 nitric oxide + NADH + 2 O2 = 2 nitrate + NAD(+) + H(+). Is involved in NO detoxification in an aerobic process, termed nitric oxide dioxygenase (NOD) reaction that utilizes O(2) and NAD(P)H to convert NO to nitrate, which protects the bacterium from various noxious nitrogen compounds. Therefore, plays a central role in the inducible response to nitrosative stress. The polypeptide is Flavohemoprotein (Bacillus cereus (strain ATCC 14579 / DSM 31 / CCUG 7414 / JCM 2152 / NBRC 15305 / NCIMB 9373 / NCTC 2599 / NRRL B-3711)).